We begin with the raw amino-acid sequence, 405 residues long: 4-hydroxy-3-methylbut-2-en-1-yl diphosphate synthase (flavodoxin) (405 aa).

[4Fe-4S] cluster contacts are provided by Cys297, Cys300, Cys343, and Glu350.

Belongs to the IspG family. [4Fe-4S] cluster is required as a cofactor.

The enzyme catalyses (2E)-4-hydroxy-3-methylbut-2-enyl diphosphate + oxidized [flavodoxin] + H2O + 2 H(+) = 2-C-methyl-D-erythritol 2,4-cyclic diphosphate + reduced [flavodoxin]. Its pathway is isoprenoid biosynthesis; isopentenyl diphosphate biosynthesis via DXP pathway; isopentenyl diphosphate from 1-deoxy-D-xylulose 5-phosphate: step 5/6. Functionally, converts 2C-methyl-D-erythritol 2,4-cyclodiphosphate (ME-2,4cPP) into 1-hydroxy-2-methyl-2-(E)-butenyl 4-diphosphate. This is 4-hydroxy-3-methylbut-2-en-1-yl diphosphate synthase (flavodoxin) from Francisella tularensis subsp. mediasiatica (strain FSC147).